We begin with the raw amino-acid sequence, 90 residues long: U-scoloptoxin(15)-Sa3a (90 aa).

A signal peptide spans methionine 1–serine 18.

It belongs to the scoloptoxin-15 family. Contains 3 disulfide bonds. As to expression, expressed by the venom gland.

The protein localises to the secreted. This chain is U-scoloptoxin(15)-Sa3a, found in Scolopendra alternans (Florida Keys giant centipede).